A 184-amino-acid chain; its full sequence is ATP synthase subunit b (184 aa).

A helical membrane pass occupies residues 4-24; that stretch reads LSVLFALVASPALAASGPFFS.

This sequence belongs to the ATPase B chain family. F-type ATPases have 2 components, F(1) - the catalytic core - and F(0) - the membrane proton channel. F(1) has five subunits: alpha(3), beta(3), gamma(1), delta(1), epsilon(1). F(0) has three main subunits: a(1), b(2) and c(10-14). The alpha and beta chains form an alternating ring which encloses part of the gamma chain. F(1) is attached to F(0) by a central stalk formed by the gamma and epsilon chains, while a peripheral stalk is formed by the delta and b chains.

The protein resides in the cell inner membrane. In terms of biological role, f(1)F(0) ATP synthase produces ATP from ADP in the presence of a proton or sodium gradient. F-type ATPases consist of two structural domains, F(1) containing the extramembraneous catalytic core and F(0) containing the membrane proton channel, linked together by a central stalk and a peripheral stalk. During catalysis, ATP synthesis in the catalytic domain of F(1) is coupled via a rotary mechanism of the central stalk subunits to proton translocation. Functionally, component of the F(0) channel, it forms part of the peripheral stalk, linking F(1) to F(0). The polypeptide is ATP synthase subunit b (Paracoccus denitrificans (strain Pd 1222)).